The sequence spans 301 residues: MIQILGKTNIDFLGKKYIALALSCIMIILGIFAIFQIHAGKANLGVDFAGGLSLQIRFSQPVTLAEVRTVLDKAGIKDADIQELPTEKKILIKLKKQQEGIQDTIEKALKENLTAKEPIIESVTEIGPKIGERTKRDALFAILAATAGILIYIAIRFKFHFSIGATVATFHDVMAVLGIFYILDKEINLIFISALLTIAGYSLTDTVVVFDRIRENLGKVAKGTMTLEALMNKSINEVLSRTIVTSLTTLMAAVALFFFGGEVLHDFALAMILGILVGTYSSIFVASPVVLLLGKNSLIKR.

The next 6 membrane-spanning stretches (helical) occupy residues 17–37, 137–157, 163–183, 190–210, 239–261, and 272–292; these read YIAL…IFQI, DALF…AIRF, IGAT…FYIL, IFIS…VVVF, LSRT…FFGG, and ILGI…VVLL.

It belongs to the SecD/SecF family. SecF subfamily. In terms of assembly, forms a complex with SecD. Part of the essential Sec protein translocation apparatus which comprises SecA, SecYEG and auxiliary proteins SecDF. Other proteins may also be involved.

The protein resides in the cell inner membrane. In terms of biological role, part of the Sec protein translocase complex. Interacts with the SecYEG preprotein conducting channel. SecDF uses the proton motive force (PMF) to complete protein translocation after the ATP-dependent function of SecA. This chain is Protein translocase subunit SecF, found in Thermodesulfovibrio yellowstonii (strain ATCC 51303 / DSM 11347 / YP87).